The chain runs to 229 residues: tRNA (guanine-N(7)-)-methyltransferase (229 aa).

Glu59, Glu84, Asp111, and Asp134 together coordinate S-adenosyl-L-methionine. The active site involves Asp134. Substrate-binding positions include Lys138, Asp170, and 205–208 (TKFE).

The protein belongs to the class I-like SAM-binding methyltransferase superfamily. TrmB family.

It carries out the reaction guanosine(46) in tRNA + S-adenosyl-L-methionine = N(7)-methylguanosine(46) in tRNA + S-adenosyl-L-homocysteine. The protein operates within tRNA modification; N(7)-methylguanine-tRNA biosynthesis. In terms of biological role, catalyzes the formation of N(7)-methylguanine at position 46 (m7G46) in tRNA. This is tRNA (guanine-N(7)-)-methyltransferase from Nitrosospira multiformis (strain ATCC 25196 / NCIMB 11849 / C 71).